The primary structure comprises 155 residues: Small ribosomal subunit protein uS7c (155 aa).

The protein belongs to the universal ribosomal protein uS7 family. As to quaternary structure, part of the 30S ribosomal subunit.

Its subcellular location is the plastid. The protein resides in the chloroplast. In terms of biological role, one of the primary rRNA binding proteins, it binds directly to 16S rRNA where it nucleates assembly of the head domain of the 30S subunit. This is Small ribosomal subunit protein uS7c (rps7) from Saruma henryi (Upright wild ginger).